The primary structure comprises 60 residues: Large ribosomal subunit protein uL30 (60 aa).

This sequence belongs to the universal ribosomal protein uL30 family. In terms of assembly, part of the 50S ribosomal subunit.

The protein is Large ribosomal subunit protein uL30 of Shewanella sp. (strain ANA-3).